The chain runs to 549 residues: MFS-type transporter TwmF (549 aa).

Transmembrane regions (helical) follow at residues 29–49 (IVIG…VLTI), 63–83 (NFIW…PLFG), 99–119 (VAIF…AMLI), and 126–146 (GVGS…LVPL). Asparagine 151 is a glycosylation site (N-linked (GlcNAc...) asparagine). 10 helical membrane passes run 155–175 (ILMS…GAIV), 182–202 (WVFY…FIFL), 221–241 (LVGN…LSYA), 249–269 (SWHT…FAGL), 291–311 (IILA…LFFL), 328–348 (VALL…AIAL), 355–375 (KPVH…FTLF), 390–410 (IVAF…QAFI), 421–441 (AWYF…AAIF), and 502–522 (VSIA…DVGL).

Belongs to the major facilitator superfamily.

Its subcellular location is the membrane. Its function is as follows. MFS efflux transporter; part of the gene cluster that mediates the biosynthesis of wortmanamides A and B, reduced long-chain polyketides amidated with a specific omega-amino acid, 5-aminopentanoic acid (5PA). This Talaromyces wortmannii (Penicillium wortmannii) protein is MFS-type transporter TwmF.